The primary structure comprises 35 residues: Photosystem II reaction center protein T (35 aa).

Residues 3 to 23 (ALVYTFLLISTLGIIFFAIFF) traverse the membrane as a helical segment.

Belongs to the PsbT family. As to quaternary structure, PSII is composed of 1 copy each of membrane proteins PsbA, PsbB, PsbC, PsbD, PsbE, PsbF, PsbH, PsbI, PsbJ, PsbK, PsbL, PsbM, PsbT, PsbY, PsbZ, Psb30/Ycf12, at least 3 peripheral proteins of the oxygen-evolving complex and a large number of cofactors. It forms dimeric complexes.

It is found in the plastid. Its subcellular location is the chloroplast thylakoid membrane. Its function is as follows. Found at the monomer-monomer interface of the photosystem II (PS II) dimer, plays a role in assembly and dimerization of PSII. PSII is a light-driven water plastoquinone oxidoreductase, using light energy to abstract electrons from H(2)O, generating a proton gradient subsequently used for ATP formation. The polypeptide is Photosystem II reaction center protein T (Welwitschia mirabilis (Tree tumbo)).